A 407-amino-acid polypeptide reads, in one-letter code: tRNA(Ile)-lysidine synthase (407 aa).

36–41 (SGGRDS) is a binding site for ATP.

It belongs to the tRNA(Ile)-lysidine synthase family.

The protein localises to the cytoplasm. The enzyme catalyses cytidine(34) in tRNA(Ile2) + L-lysine + ATP = lysidine(34) in tRNA(Ile2) + AMP + diphosphate + H(+). In terms of biological role, ligates lysine onto the cytidine present at position 34 of the AUA codon-specific tRNA(Ile) that contains the anticodon CAU, in an ATP-dependent manner. Cytidine is converted to lysidine, thus changing the amino acid specificity of the tRNA from methionine to isoleucine. The protein is tRNA(Ile)-lysidine synthase of Tropheryma whipplei (strain TW08/27) (Whipple's bacillus).